Consider the following 313-residue polypeptide: NAD-capped RNA hydrolase NudC (313 aa).

Arginine 111 provides a ligand contact to substrate. Residues 168–293 (PRIDPAVICL…DWSSASESKL (126 aa)) form the Nudix hydrolase domain. 3 residues coordinate a divalent metal cation: alanine 202, glutamate 218, and glutamate 222. The Nudix box signature appears at 203–224 (GFVEAGESFEVCVAREIREEIG). 236-243 (QQWPFPRS) is a substrate binding site. A divalent metal cation is bound at residue glutamate 264.

Belongs to the Nudix hydrolase family. NudC subfamily. Homodimer. Mg(2+) is required as a cofactor. It depends on Mn(2+) as a cofactor.

It carries out the reaction a 5'-end NAD(+)-phospho-ribonucleoside in mRNA + H2O = a 5'-end phospho-adenosine-phospho-ribonucleoside in mRNA + beta-nicotinamide D-ribonucleotide + 2 H(+). It catalyses the reaction NAD(+) + H2O = beta-nicotinamide D-ribonucleotide + AMP + 2 H(+). The enzyme catalyses NADH + H2O = reduced beta-nicotinamide D-ribonucleotide + AMP + 2 H(+). MRNA decapping enzyme that specifically removes the nicotinamide adenine dinucleotide (NAD) cap from a subset of mRNAs by hydrolyzing the diphosphate linkage to produce nicotinamide mononucleotide (NMN) and 5' monophosphate mRNA. The NAD-cap is present at the 5'-end of some mRNAs and stabilizes RNA against 5'-processing. Has preference for mRNAs with a 5'-end purine. Catalyzes the hydrolysis of a broad range of dinucleotide pyrophosphates. The chain is NAD-capped RNA hydrolase NudC from Mycobacterium tuberculosis (strain ATCC 25177 / H37Ra).